The following is a 383-amino-acid chain: Putative [LysW]-aminoadipate semialdehyde/glutamate semialdehyde transaminase (383 aa).

Residues 97-98 (GT) and phenylalanine 124 each bind pyridoxal 5'-phosphate. Arginine 127 is a binding site for substrate. 209-212 (DEVQ) contributes to the pyridoxal 5'-phosphate binding site. Lysine 238 carries the N6-(pyridoxal phosphate)lysine modification. Substrate is bound at residue serine 266. Pyridoxal 5'-phosphate is bound at residue threonine 267.

Belongs to the class-III pyridoxal-phosphate-dependent aminotransferase family. LysJ subfamily. As to quaternary structure, homodimer. Pyridoxal 5'-phosphate serves as cofactor.

Its subcellular location is the cytoplasm. The catalysed reaction is [amino-group carrier protein]-C-terminal-gamma-(L-lysyl)-L-glutamate + 2-oxoglutarate = [amino-group carrier protein]-C-terminal-N-(1-carboxy-5-oxopentan-1-yl)-L-glutamine + L-glutamate. It catalyses the reaction [amino-group carrier protein]-C-terminal-gamma-(L-ornithyl)-L-glutamate + 2-oxoglutarate = [amino-group carrier protein]-C-terminal-gamma-(L-glutamyl-5-semialdehyde)-L-glutamate + L-glutamate. The protein operates within amino-acid biosynthesis; L-lysine biosynthesis via AAA pathway; L-lysine from L-alpha-aminoadipate (Thermus route): step 4/5. It functions in the pathway amino-acid biosynthesis; L-arginine biosynthesis. In terms of biological role, involved in both the arginine and lysine biosynthetic pathways. The protein is Putative [LysW]-aminoadipate semialdehyde/glutamate semialdehyde transaminase of Pyrobaculum aerophilum (strain ATCC 51768 / DSM 7523 / JCM 9630 / CIP 104966 / NBRC 100827 / IM2).